The chain runs to 178 residues: MSKNRAEKAEIIEEIGEKLNEYPIIYLTNFEGLTVAQSNDLRGRFREAGVEYQVTKNTLARLALDRIEGKDALEEFFAGPTAIAFSEDPAKPARVLQDFLEEEELGRPELKVAWIEGDMYDDPEALDTLAELKSREELIGEVIGRLLAPAQNLVGGLQGPGQRLSGLLQSLADEEEDE.

It belongs to the universal ribosomal protein uL10 family. Part of the ribosomal stalk of the 50S ribosomal subunit. The N-terminus interacts with L11 and the large rRNA to form the base of the stalk. The C-terminus forms an elongated spine to which L12 dimers bind in a sequential fashion forming a multimeric L10(L12)X complex.

In terms of biological role, forms part of the ribosomal stalk, playing a central role in the interaction of the ribosome with GTP-bound translation factors. This is Large ribosomal subunit protein uL10 from Salinibacter ruber (strain DSM 13855 / M31).